A 716-amino-acid polypeptide reads, in one-letter code: Polyribonucleotide nucleotidyltransferase (716 aa).

The Mg(2+) site is built by aspartate 495 and aspartate 501. The KH domain occupies proline 562–isoleucine 621. An S1 motif domain is found at glycine 631–lysine 699.

The protein belongs to the polyribonucleotide nucleotidyltransferase family. The cofactor is Mg(2+).

Its subcellular location is the cytoplasm. It catalyses the reaction RNA(n+1) + phosphate = RNA(n) + a ribonucleoside 5'-diphosphate. Functionally, involved in mRNA degradation. Catalyzes the phosphorolysis of single-stranded polyribonucleotides processively in the 3'- to 5'-direction. This chain is Polyribonucleotide nucleotidyltransferase, found in Synechococcus elongatus (strain ATCC 33912 / PCC 7942 / FACHB-805) (Anacystis nidulans R2).